A 200-amino-acid polypeptide reads, in one-letter code: ADP-ribose 1''-phosphate phosphatase (200 aa).

The Macro domain maps to 1 to 200; that stretch reads MDPPSVRSKI…EVTVVRPHGG (200 aa). Substrate-binding positions include 15–17, 29–31, 36–41, and 169–175; these read GDL, ACN, WGKGIA, and FNAGLFG.

Belongs to the POA1 family.

The enzyme catalyses ADP-alpha-D-ribose 1''-phosphate + H2O = ADP-D-ribose + phosphate. Functionally, highly specific phosphatase involved in the metabolism of ADP-ribose 1''-phosphate (Appr1p) which is produced as a consequence of tRNA splicing. This Aspergillus fumigatus (strain ATCC MYA-4609 / CBS 101355 / FGSC A1100 / Af293) (Neosartorya fumigata) protein is ADP-ribose 1''-phosphate phosphatase (poa1).